The chain runs to 505 residues: Cytochrome P450 9b1 (505 aa).

Cys449 is a heme binding site.

The protein belongs to the cytochrome P450 family. Heme is required as a cofactor.

The protein localises to the endoplasmic reticulum membrane. It is found in the microsome membrane. In terms of biological role, may be involved in the metabolism of insect hormones and in the breakdown of synthetic insecticides. This is Cytochrome P450 9b1 (Cyp9b1) from Drosophila melanogaster (Fruit fly).